The primary structure comprises 241 residues: Ureidoacrylate amidohydrolase RutB (241 aa).

The Proton acceptor role is filled by aspartate 38. Residue lysine 147 is part of the active site. Catalysis depends on cysteine 180, which acts as the Nucleophile.

The protein belongs to the isochorismatase family. RutB subfamily.

The enzyme catalyses (Z)-3-ureidoacrylate + H2O + H(+) = (Z)-3-aminoacrylate + NH4(+) + CO2. The catalysed reaction is (Z)-3-ureidoacrylate + H2O = (Z)-3-aminoacrylate + carbamate + H(+). It carries out the reaction (Z)-2-methylureidoacrylate + H2O + H(+) = (Z)-2-methylaminoacrylate + NH4(+) + CO2. Hydrolyzes ureidoacrylate to form aminoacrylate and carbamate. The carbamate hydrolyzes spontaneously, thereby releasing one of the nitrogen atoms of the pyrimidine ring as ammonia and one of its carbon atoms as CO2. In Haliangium ochraceum (strain DSM 14365 / JCM 11303 / SMP-2), this protein is Ureidoacrylate amidohydrolase RutB.